Reading from the N-terminus, the 306-residue chain is Agmatinase (306 aa).

Residues histidine 126, aspartate 149, histidine 151, aspartate 153, aspartate 230, and aspartate 232 each coordinate Mn(2+).

It belongs to the arginase family. Agmatinase subfamily. Mn(2+) is required as a cofactor.

It carries out the reaction agmatine + H2O = urea + putrescine. It participates in amine and polyamine biosynthesis; putrescine biosynthesis via agmatine pathway; putrescine from agmatine: step 1/1. Catalyzes the formation of putrescine from agmatine. The protein is Agmatinase of Cronobacter sakazakii (strain ATCC BAA-894) (Enterobacter sakazakii).